The sequence spans 1783 residues: 6-methylsalicylic acid synthase (1783 aa).

Residues 1 to 31 (MITSTSSTEVLTPANGSDDSKGTTTPATSSG) are compositionally biased toward polar residues. The disordered stretch occupies residues 1 to 40 (MITSTSSTEVLTPANGSDDSKGTTTPATSSGDPEMHDDLL). Positions 45-474 (HDDVAIIGMA…GTVSHAIIEA (430 aa)) constitute a Ketosynthase family 3 (KS3) domain. Catalysis depends on for beta-ketoacyl synthase activity residues Cys-217, His-352, and His-394. A malonyl-CoA:ACP transacylase (MAT) domain region spans residues 587–884 (WVFSGHGAQW…TPTMVRKQPA (298 aa)). The active-site For acyl/malonyl transferase activity is Ser-673. A product template (PT) domain region spans residues 942-1215 (THKPAANDLL…AFAGVEGESL (274 aa)). The segment at 948-1064 (NDLLGTRTAL…ATVGADATPS (117 aa)) is N-terminal hotdog fold. In terms of domain architecture, PKS/mFAS DH spans 948-1216 (NDLLGTRTAL…FAGVEGESLS (269 aa)). His-980 acts as the Proton acceptor; for dehydratase activity in catalysis. The C-terminal hotdog fold stretch occupies residues 1078–1216 (PQKLSDSFSI…FAGVEGESLS (139 aa)). Asp-1130 (proton donor; for dehydratase activity) is an active-site residue. Positions 1707 to 1781 (EYVLVVVKKC…HLVEYFCQVL (75 aa)) constitute a Carrier domain. Residue Ser-1741 is modified to O-(pantetheine 4'-phosphoryl)serine.

The enzyme catalyses 3 malonyl-CoA + acetyl-CoA + NADPH + 3 H(+) = 6-methylsalicylate + 3 CO2 + NADP(+) + 4 CoA + H2O. The protein operates within secondary metabolite biosynthesis; terpenoid biosynthesis. In terms of biological role, non-reducing polyketide synthase; part of the gene cluster that mediates the biosynthesis of macrophorins, isoprenoid epoxycyclohexenones containing cyclized drimane moieties. The first step of the pathway is the synthesis of 6-methylsalicylic acid (6-MSA) by the polyketide synthase macA. 6-MSA is then converted to m-cresol by the decarboxylase macB. The cytochrome P450 monooxygenase macC then catalyzes the oxidation of m-cresol to toluquinol. Epoxidation of toluquinol is then performed by the short chain dehydrogenase macD, with the help of macE, and a further prenylation by macG leads to 7-deacetoxyyanuthone A. The next step is the hydroxylation of C-22 of 7-deacetoxyyanuthone A by the cytochrome P450 monooxygenase macH to yield 22-deacetylyanuthone A. O-Mevalon transferase macI then attaches mevalon to the hydroxyl group of 22-deacetylyanuthone A to produce yanuthone E. The terpene cyclase macJ catalyzes the cyclization of 22-deacetylyanuthone A to macrophorin A. MacJ is also able to catalyze cyclization of yanuthone E and 7-deacetoxyyanuthone A to their corresponding macrophorins. The macJ products can be further modified by macH and macJ, as well as by the FAD-dependent monooxygenase macF, to produce additional macrophorins, including 4'-oxomacrophorin A, 4'-oxomacrophorin D and 4'-oxomacrophorin E. The protein is 6-methylsalicylic acid synthase of Penicillium terrestre.